We begin with the raw amino-acid sequence, 123 residues long: Preprofallaxidin-3 (123 aa).

Positions 1-22 are cleaved as a signal peptide; that stretch reads MASLKKSLFLVLFLGLVSLSIC. Positions 23–46 are excised as a propeptide; the sequence is EEKKRENEDDAEDENHEEESEEKR. A disordered region spans residues 26 to 46; that stretch reads KRENEDDAEDENHEEESEEKR. The segment covering 30-42 has biased composition (acidic residues); sequence EDDAEDENHEEES. Leu62 carries the leucine amide modification. Residues 66 to 70 constitute a propeptide that is removed on maturation; that stretch reads SEEKR. Phe74 bears the Phenylalanine amide mark. Positions 78-82 are excised as a propeptide; the sequence is SEEKR. At Phe88 the chain carries Phenylalanine amide. The propeptide occupies 92-96; that stretch reads SEEKR. The residue at position 102 (Ile102) is an Isoleucine amide. A propeptide spanning residues 106 to 110 is cleaved from the precursor; the sequence is SEEKR. Residue Ile116 is modified to Isoleucine amide. The propeptide occupies 120-123; it reads KKKK.

This sequence belongs to the frog skin active peptide (FSAP) family. Brevinin subfamily. In terms of tissue distribution, expressed by the skin glands.

The protein resides in the secreted. Functionally, fallaxidin-1.1 shows no antibacterial activity against Gram-positive or Gram-negative bacteria. Does not inhibit the formation of NO by neuronal nitric oxide synthase. Has no effect on splenocyte proliferation or smooth muscle contraction. Fallaxidin-1.2 shows no antibacterial activity against Gram-positive or Gram-negative bacteria. Does not inhibit the formation of NO by neuronal nitric oxide synthase. Has no effect on splenocyte proliferation or smooth muscle contraction. In terms of biological role, fallaxidin-1.3 shows no antibacterial activity against Gram-positive or Gram-negative bacteria. Does not inhibit the formation of NO by neuronal nitric oxide synthase. Has no effect on splenocyte proliferation or smooth muscle contraction. Its function is as follows. Fallaxidin-3.2 shows antibacterial activity against the Gram-positive bacteria E.faecalis (MIC=100 uM) and L.lactis (MIC=500 uM). No antibacterial activity against the Gram-positive bacteria B.cereus, L.innocua, M.luteus, S.epidermidis, S.uberis and S.aureus, or the Gram-negative bacteria E.cloacae and E.coli. This chain is Preprofallaxidin-3, found in Litoria fallax (Eastern dwarf tree frog).